A 231-amino-acid chain; its full sequence is Large ribosomal subunit protein uL1 (231 aa).

It belongs to the universal ribosomal protein uL1 family. In terms of assembly, part of the 50S ribosomal subunit.

Binds directly to 23S rRNA. The L1 stalk is quite mobile in the ribosome, and is involved in E site tRNA release. Its function is as follows. Protein L1 is also a translational repressor protein, it controls the translation of the L11 operon by binding to its mRNA. This Francisella tularensis subsp. tularensis (strain WY96-3418) protein is Large ribosomal subunit protein uL1.